We begin with the raw amino-acid sequence, 515 residues long: WUSCHEL-related homeobox 12 (515 aa).

Composition is skewed to polar residues over residues 23-32 (QQQPDMNGNG) and 44-57 (TAATTGNGKPSLLS). Disordered regions lie at residues 23 to 76 (QQQP…WNPR), 130 to 156 (NKLRAAGHHHHHGRAAALPRASAPPST), and 176 to 195 (LLAATSSSSSSSDRSSGSSK). Positions 62–71 (EGTRNPEPKP) are enriched in basic and acidic residues. Residues 68 to 132 (EPKPRWNPRP…NRKSRTKNKL (65 aa)) constitute a DNA-binding region (homeobox; WUS-type). The segment covering 130–143 (NKLRAAGHHHHHGR) has biased composition (basic residues). Low complexity-rich tracts occupy residues 144 to 156 (AAALPRASAPPST) and 177 to 195 (LAATSSSSSSSDRSSGSSK).

Belongs to the WUS homeobox family.

It is found in the nucleus. Its function is as follows. Transcription factor which may be involved in developmental processes. The protein is WUSCHEL-related homeobox 12 (WOX12) of Oryza sativa subsp. japonica (Rice).